Here is a 90-residue protein sequence, read N- to C-terminus: DNA-binding protein HU-beta (90 aa).

Belongs to the bacterial histone-like protein family. Heterodimer of an alpha and a beta chain.

Functionally, histone-like DNA-binding protein which is capable of wrapping DNA to stabilize it, and thus to prevent its denaturation under extreme environmental conditions. The polypeptide is DNA-binding protein HU-beta (hupB) (Serratia marcescens).